Consider the following 1462-residue polypeptide: Trifunctional nucleotide phosphoesterase protein YfkN (1462 aa).

The signal sequence occupies residues 1 to 35; that stretch reads MRIQKRRTHVENILRILLPPIMILSLILPTPPIHA. The 2',3'-cyclic nucleotide 2'-phosphodiesterase/3'-nucleotidase stretch occupies residues 36–623; that stretch reads EESAAPQVHL…GTNLTFESSL (588 aa). 7 residues coordinate a divalent metal cation: D52, H54, D97, N141, H249, H282, and H284. A ribonucleoside 3'-phosphate contacts are provided by residues Y458 and 561–567; that span reads YRASGGG. The segment at 624–1427 is 5'-nucleotidase; that stretch reads LAKPFADKAD…GPAGGLLPDT (804 aa). Positions 676, 678, 708, 740, 872, 895, and 897 each coordinate a divalent metal cation. A ribonucleoside 5'-phosphate is bound by residues F1047 and 1127-1133; that span reads FVGAGGD. The interval 1350–1422 is disordered; the sequence is ILNSGSNNKP…GSGTDGPAGG (73 aa). Positions 1405–1421 are enriched in gly residues; that stretch reads GSGGNGSGGSGTDGPAG. The short motif at 1424–1428 is the LPXTG sorting signal element; that stretch reads LPDTA. T1427 carries the pentaglycyl murein peptidoglycan amidated threonine modification. A propeptide spans 1428–1462 (removed by sortase); it reads ATSMYSILLAGFLISALGTAMYLHQRRKQNRANQA.

Belongs to the 5'-nucleotidase family. The cofactor is a divalent metal cation.

The protein localises to the secreted. It localises to the cell wall. The catalysed reaction is a nucleoside 2',3'-cyclic phosphate + H2O = a nucleoside 3'-phosphate + H(+). It carries out the reaction a ribonucleoside 3'-phosphate + H2O = a ribonucleoside + phosphate. The enzyme catalyses a ribonucleoside 5'-phosphate + H2O = a ribonucleoside + phosphate. Functionally, catalyzes the release of inorganic phosphate from 2',3'-cyclic nucleotides through consecutive 2',3'-phosphodiesterase and 3'- (or 2') nucleotidase activities. Also possesses a 5'-nucleotidase activity. Does not catalyze the release of inorganic phosphate from 3',5'-cyclic nucleotides. Probably plays a role in the cellular reprocessing of nucleotides present in the medium, under conditions of phosphate shortage. The sequence is that of Trifunctional nucleotide phosphoesterase protein YfkN (yfkN) from Bacillus subtilis (strain 168).